A 617-amino-acid chain; its full sequence is Probable Xaa-Pro aminopeptidase P (617 aa).

D414, D425, E523, and E537 together coordinate Mn(2+).

The protein belongs to the peptidase M24B family. It depends on Mn(2+) as a cofactor.

It carries out the reaction Release of any N-terminal amino acid, including proline, that is linked to proline, even from a dipeptide or tripeptide.. Catalyzes the removal of a penultimate prolyl residue from the N-termini of peptides. This is Probable Xaa-Pro aminopeptidase P (AMPP) from Colletotrichum graminicola (strain M1.001 / M2 / FGSC 10212) (Maize anthracnose fungus).